The primary structure comprises 203 residues: Holliday junction branch migration complex subunit RuvA (203 aa).

The interval 1-64 is domain I; it reads MIGRLRGIIL…EDAQLLYGFN (64 aa). A domain II region spans residues 65–142; the sequence is NKQERMLFRE…KGLHGDLFTP (78 aa). The flexible linker stretch occupies residues 143–154; that stretch reads AADLVLTSPNGP. The segment at 155-203 is domain III; that stretch reads TSDDAEQEAVAALVALGYKPQEASRMVSKIAKPDANSETLIREALRAAL.

It belongs to the RuvA family. Homotetramer. Forms an RuvA(8)-RuvB(12)-Holliday junction (HJ) complex. HJ DNA is sandwiched between 2 RuvA tetramers; dsDNA enters through RuvA and exits via RuvB. An RuvB hexamer assembles on each DNA strand where it exits the tetramer. Each RuvB hexamer is contacted by two RuvA subunits (via domain III) on 2 adjacent RuvB subunits; this complex drives branch migration. In the full resolvosome a probable DNA-RuvA(4)-RuvB(12)-RuvC(2) complex forms which resolves the HJ.

It localises to the cytoplasm. Functionally, the RuvA-RuvB-RuvC complex processes Holliday junction (HJ) DNA during genetic recombination and DNA repair, while the RuvA-RuvB complex plays an important role in the rescue of blocked DNA replication forks via replication fork reversal (RFR). RuvA specifically binds to HJ cruciform DNA, conferring on it an open structure. The RuvB hexamer acts as an ATP-dependent pump, pulling dsDNA into and through the RuvAB complex. HJ branch migration allows RuvC to scan DNA until it finds its consensus sequence, where it cleaves and resolves the cruciform DNA. This chain is Holliday junction branch migration complex subunit RuvA, found in Enterobacter sp. (strain 638).